The primary structure comprises 1119 residues: Transient receptor potential cation channel subfamily A member 1 (1119 aa).

At 1-718 (MKRSLRKMWR…MKWLAYGFRA (718 aa)) the chain is on the cytoplasmic side. ANK repeat units lie at residues 62 to 92 (MDTFFLHYAAAEGQIELMEKITRDSSLEVLH), 97 to 126 (YGNTPLHCAVEKNQIESVKFLLSRGANPNL), 130 to 160 (NMMAPLHIAVQGMNNEVMKVLLEHRTIDVNL), 164 to 193 (NGNTAVIIACTTNNSEALQILLKKGAKPCK), 197 to 226 (WGCFPIHQAAFSGSKECMEIILRFGEEHGY), 238 to 267 (GKATPLHLAVQNGDLEMIKMCLDNGAQIDP), 271 to 301 (GRCTAIHFAATQGATEIVKLMISSYSGSVDI), 308 to 337 (CHETMLHRASLFDHHELADYLISVGADINK), 341 to 370 (EGRSPLILATASASWNIVNLLLSKGAQVDI), 374 to 403 (FGRNFLHLTVQQPYGLKNLRPEFMQMQQIK), 412 to 441 (DGCTPLHYACRQGGPGSVNNLLGFNVSIHS), 445 to 474 (DKKSPLHFAASYGRINTCQRLLQDISDTRL), 481 to 510 (HGMTPLHLAAKNGHDKVVQLLLKKGALFLS), 513 to 542 (NGWTALHHASMGGYTQTMKVILDTNLKCTD), 547 to 576 (DGNTALHFAAREGHAKAVALLLSHNADIVL), and 579 to 609 (QQASFLHLALHNKRKEVVLTIIRSKRWDECL). 5 disulfides stabilise this stretch: Cys-192-Cys-665, Cys-462-Cys-665, Cys-608-Cys-621, Cys-621-Cys-665, and Cys-633-Cys-856. Pro-394 bears the 4-hydroxyproline; by EGLN1; transient; in normoxia and hyperoxia mark. Positions 414 and 421 each coordinate (E)-cinnamaldehyde. Cys-621 is a binding site for (E)-cinnamaldehyde. Cys-633 carries the cysteine sulfenic acid (-SOH); transient; in hyperoxia modification. 3 residues coordinate (E)-cinnamaldehyde: Cys-641, Cys-665, and Lys-710. Residues 719-739 (HMMNLGSYCLGLIPMTILVVN) form a helical membrane-spanning segment. The Extracellular portion of the chain corresponds to 740–767 (IKPGMAFNSTGIINETSDHSEILDTTNS). Asn-747 and Asn-753 each carry an N-linked (GlcNAc...) asparagine glycan. Residues 768–793 (YLIKTCMILVFLSSIFGYCKEAGQIF) traverse the membrane as a helical segment. 2 residues coordinate Ca(2+): Glu-788 and Gln-791. Residues 794–798 (QQKRN) lie on the Cytoplasmic side of the membrane. A helical membrane pass occupies residues 799 to 823 (YFMDISNVLEWIIYTTGIIFVLPLF). Residues Asn-805 and Glu-808 each coordinate Ca(2+). Residues 824 to 829 (VEIPAH) are Extracellular-facing. Residues 830–850 (LQWQCGAIAVYFYWMNFLLYL) form a helical membrane-spanning segment. The Cytoplasmic portion of the chain corresponds to 851 to 862 (QRFENCGIFIVM). Position 856 is a cysteine sulfenic acid (-SOH); transient; in hyperoxia (Cys-856). Residues 863–892 (LEVILKTLLRSTVVFIFLLLAFGLSFYILL) traverse the membrane as a helical segment. Topologically, residues 893–901 (NLQDPFSSP) are extracellular. The pore-forming intramembrane region spans 902 to 922 (LLSIIQTFSMMLGDINYRESF). The Extracellular segment spans residues 923-933 (LEPYLRNELAH). Residues 934–960 (PVLSFAQLVSFTIFVPIVLMNLLIGLA) form a helical membrane-spanning segment. At 961–1119 (VGDIAEVQKH…VKAKTHHLEP (159 aa)) the chain is on the cytoplasmic side. Residues 1042–1071 (MEILKQKYRLKDLTFLLEKQHELIKLIIQK) adopt a coiled-coil conformation. Residue 1046 to 1052 (KQKYRLK) coordinates a 1,2-diacyl-sn-glycero-3-phospho-(1D-myo-inositol).

This sequence belongs to the transient receptor (TC 1.A.4) family. Homotetramer. Interacts with TMEM100. Interacts with EGLN1. Interacts with the scorpion wasabi receptor toxin at the same site that electrophiles but in a non-covalent manner. TRPA1 activation by electrophiles occurs though covalent modification of specific cysteine residues in the N-terminal cytoplasmic domain. In terms of processing, hydroxylation is required for TRPA1 activity inhibition in normoxia. In hypoxia, the decrease in oxygen concentration diminishes the activity of the hydroxylase EGLN1, thus relieving TRPA1 from inhibition and ultimately leading to channel activation. Post-translationally, oxidation of Cys-633 and Cys-856 in hyperoxia may override the hydroxylase EGLN1-mediated inhibition, causing TRPA1 activation.

It is found in the cell membrane. It catalyses the reaction Ca(2+)(in) = Ca(2+)(out). The catalysed reaction is Mg(2+)(in) = Mg(2+)(out). It carries out the reaction Na(+)(in) = Na(+)(out). The enzyme catalyses K(+)(in) = K(+)(out). It catalyses the reaction Zn(2+)(in) = Zn(2+)(out). With respect to regulation, electrophilic ligands activate the channel by covalent modification of intracellular cysteines; Cys-621 plays a key role in covalent binding of electrophiles. Extracellular Ca(2+) both potentiates and inactivates TRPA1; a rapid potentiation follows by slow desensitization. Activated by increase in intracellular Ca(2+) concentration. Inhibited by the potent blocker of TRPV channels ruthenium red, A-967079, AP-18, HC-030031, and aryl sulfonamide derivative (S)-N-(4-chlorobenzyl)-1-((4-fluorophenyl)sulfonyl)pyrrolidine-2-carboxamide (ASD). Activated by benzyl isothiocyanate (BITC), iodoacetamide, sulfhydryl reactive agent MTSEA, N-methyl maleimide (NMM), N-ethylmaleimide (NEM), and 2-aminoethyldiphenylborinate (2-APB). Also activated by hyperoxia. Acivated by intracellular Zn(2+). TRPA1 activation may critically depend on the presence of small intracellular compounds such as polyphosphates. Functionally, ligand-activated Ca(2+)-permeable, nonselective cation channel involved in pain detection and possibly also in cold perception, oxygen concentration perception, cough, itch, and inner ear function. Has a relatively high Ca(2+) selectivity, with a preference for divalent over monovalent cations (Ca(2+) &gt; Ba(2+) &gt; Mg(2+) &gt; NH4(+) &gt; Li(+) &gt; K(+)), the influx of cation into the cytoplasm leads to membrane depolarization. Has a central role in the pain response to endogenous inflammatory mediators, such as bradykinin and to a diverse array of irritants. Activated by a large variety of structurally unrelated electrophilic and non-electrophilic chemical compounds, such as allylthiocyanate (AITC) from mustard oil or wasabi, cinnamaldehyde, diallyl disulfide (DADS) from garlic, and acrolein, an environmental irritant. Electrophilic ligands activate TRPA1 by interacting with critical N-terminal Cys residues in a covalent manner. Non-electrophile agonists bind at distinct sites in the transmembrane domain to promote channel activation. Also acts as an ionotropic cannabinoid receptor by being activated by delta(9)-tetrahydrocannabinol (THC), the psychoactive component of marijuana. May be a component for the mechanosensitive transduction channel of hair cells in inner ear, thereby participating in the perception of sounds. The polypeptide is Transient receptor potential cation channel subfamily A member 1 (Homo sapiens (Human)).